Here is a 215-residue protein sequence, read N- to C-terminus: Venom allergen 5.02 (215 aa).

An N-terminal signal peptide occupies residues proline 1 to alanine 10. 4 cysteine pairs are disulfide-bonded: cysteine 14–cysteine 26, cysteine 18–cysteine 111, cysteine 36–cysteine 104, and cysteine 181–cysteine 198. The 146-residue stretch at valine 55–tyrosine 200 folds into the SCP domain.

It belongs to the CRISP family. Venom allergen 5-like subfamily. In terms of tissue distribution, expressed by the venom gland.

The protein localises to the secreted. The protein is Venom allergen 5.02 of Dolichovespula maculata (Bald-faced hornet).